Reading from the N-terminus, the 120-residue chain is Glycine cleavage system H protein (120 aa).

The region spanning V17–K99 is the Lipoyl-binding domain. The residue at position 58 (K58) is an N6-lipoyllysine.

The protein belongs to the GcvH family. In terms of assembly, the glycine cleavage system is composed of four proteins: P, T, L and H. The cofactor is (R)-lipoate.

Its function is as follows. The glycine cleavage system catalyzes the degradation of glycine. The H protein shuttles the methylamine group of glycine from the P protein to the T protein. This Methylorubrum extorquens (strain PA1) (Methylobacterium extorquens) protein is Glycine cleavage system H protein.